Consider the following 251-residue polypeptide: Insulin-induced gene 1 protein (251 aa).

The Cytoplasmic segment spans residues 1–58 (MPRLEEHCWSCSCSTSVKTKDLSSAGWIVCKTGEMMSIITSVLSHAYGSLHSLQSANL). Residues 59–81 (IRRGLVLFIVGVVLALVLNLLQI) traverse the membrane as a helical segment. Residues 82-100 (QRNVTLFPEEVLDTLFSSA) lie on the Extracellular side of the membrane. A helical transmembrane segment spans residues 101-118 (WWIPLCCGTAAAVVGLLY). Residues 119–133 (PCLDHHLGEPHKFKR) are Cytoplasmic-facing. The helical transmembrane segment at 134-156 (EWASVMRCIAVFVGINHASAKLD) threads the bilayer. Residues 157-159 (FAN) lie on the Extracellular side of the membrane. The chain crosses the membrane as a helical span at residues 160–178 (NVQLSLTLAALSLGLWWTF). Residues 179–183 (DRSRS) are Cytoplasmic-facing. A helical membrane pass occupies residues 184–205 (GFGLGLTTALLATLIAQLLVYN). Over 206–219 (GIYQYTSPDFLYVR) the chain is Extracellular. A helical membrane pass occupies residues 220–237 (SWLPCIFFSGGVTVGNIG). The Cytoplasmic segment spans residues 238–251 (RQLAMGSTEKIHND). The KxHxx motif lies at 245–251 (TEKIHND).

Belongs to the INSIG family. Interacts with scap; interaction is direct and only takes place in the presence of sterols; it prevents interaction between scap and the coat protein complex II (COPII). Associates with the SCAP-SREBP complex; association is mediated via its interaction with scap and only takes place in the presence of sterols.

Its subcellular location is the endoplasmic reticulum membrane. Oxysterol-binding protein that mediates feedback control of cholesterol synthesis by controlling both endoplasmic reticulum to Golgi transport of scap and degradation of hmgcr. Acts as a negative regulator of cholesterol biosynthesis by mediating the retention of the SCAP-SREBP complex in the endoplasmic reticulum, thereby blocking the processing of sterol regulatory element-binding proteins (SREBPs). Binds oxysterol, including 25-hydroxycholesterol, regulating interaction with scap and retention of the SCAP-SREBP complex in the endoplasmic reticulum. In presence of oxysterol, interacts with scap, retaining the SCAP-SREBP complex in the endoplasmic reticulum, thereby preventing scap from escorting SREBPs to the Golgi. Sterol deprivation reduces oxysterol-binding, disrupting the interaction between insig1 and scap, thereby promoting Golgi transport of the SCAP-SREBP complex, followed by processing and nuclear translocation of SREBPs. Also regulates cholesterol synthesis by regulating degradation of hmgcr. This is Insulin-induced gene 1 protein from Danio rerio (Zebrafish).